A 1661-amino-acid chain; its full sequence is Pentafunctional AROM polypeptide (1661 aa).

The tract at residues 1-388 (MATNGVKAEP…YEKKASSVVD (388 aa)) is 3-dehydroquinate synthase. NAD(+) is bound by residues 50–52 (DTN), 87–90 (ETSK), 118–120 (GGV), and aspartate 123. Arginine 134 lines the 7-phospho-2-dehydro-3-deoxy-D-arabino-heptonate pocket. 143 to 144 (TT) lines the NAD(+) pocket. 2 residues coordinate 7-phospho-2-dehydro-3-deoxy-D-arabino-heptonate: aspartate 150 and lysine 156. Residue lysine 165 coordinates NAD(+). Asparagine 166 serves as a coordination point for 7-phospho-2-dehydro-3-deoxy-D-arabino-heptonate. Residues 183–186 (FLET) and asparagine 194 each bind NAD(+). Residue glutamate 198 coordinates Zn(2+). Residues 198-201 (EVVK) and lysine 254 contribute to the 7-phospho-2-dehydro-3-deoxy-D-arabino-heptonate site. Glutamate 264 acts as the Proton acceptor; for 3-dehydroquinate synthase activity in catalysis. 7-phospho-2-dehydro-3-deoxy-D-arabino-heptonate-binding positions include 268–272 (RNLLN) and histidine 275. A Zn(2+)-binding site is contributed by histidine 275. Residue histidine 279 is the Proton acceptor; for 3-dehydroquinate synthase activity of the active site. 7-phospho-2-dehydro-3-deoxy-D-arabino-heptonate is bound by residues histidine 291 and lysine 360. A Zn(2+)-binding site is contributed by histidine 291. Positions 401-850 (VHPGIPSDLN…WDILNQQFKA (450 aa)) are EPSP synthase. The active-site For EPSP synthase activity is cysteine 832. A shikimate kinase region spans residues 872–1064 (QKSIFIIGMR…KKKKQSFFVC (193 aa)). 879–886 (GMRGAGKT) is an ATP binding site. The 3-dehydroquinase stretch occupies residues 1065-1285 (LSAPNLEPCA…TAPGQLSAAD (221 aa)). Residue histidine 1188 is the Proton acceptor; for 3-dehydroquinate dehydratase activity of the active site. Lysine 1216 functions as the Schiff-base intermediate with substrate; for 3-dehydroquinate dehydratase activity in the catalytic mechanism. The shikimate dehydrogenase stretch occupies residues 1298 to 1661 (TKKFCIFGSP…LTYSWSLGDW (364 aa)).

This sequence in the N-terminal section; belongs to the sugar phosphate cyclases superfamily. Dehydroquinate synthase family. It in the 2nd section; belongs to the EPSP synthase family. In the 3rd section; belongs to the shikimate kinase family. The protein in the 4th section; belongs to the type-I 3-dehydroquinase family. This sequence in the C-terminal section; belongs to the shikimate dehydrogenase family. In terms of assembly, homodimer. Requires Zn(2+) as cofactor.

It is found in the cytoplasm. The catalysed reaction is 7-phospho-2-dehydro-3-deoxy-D-arabino-heptonate = 3-dehydroquinate + phosphate. The enzyme catalyses 3-dehydroquinate = 3-dehydroshikimate + H2O. It catalyses the reaction shikimate + NADP(+) = 3-dehydroshikimate + NADPH + H(+). It carries out the reaction shikimate + ATP = 3-phosphoshikimate + ADP + H(+). The catalysed reaction is 3-phosphoshikimate + phosphoenolpyruvate = 5-O-(1-carboxyvinyl)-3-phosphoshikimate + phosphate. It functions in the pathway metabolic intermediate biosynthesis; chorismate biosynthesis; chorismate from D-erythrose 4-phosphate and phosphoenolpyruvate: step 2/7. It participates in metabolic intermediate biosynthesis; chorismate biosynthesis; chorismate from D-erythrose 4-phosphate and phosphoenolpyruvate: step 3/7. The protein operates within metabolic intermediate biosynthesis; chorismate biosynthesis; chorismate from D-erythrose 4-phosphate and phosphoenolpyruvate: step 4/7. Its pathway is metabolic intermediate biosynthesis; chorismate biosynthesis; chorismate from D-erythrose 4-phosphate and phosphoenolpyruvate: step 5/7. It functions in the pathway metabolic intermediate biosynthesis; chorismate biosynthesis; chorismate from D-erythrose 4-phosphate and phosphoenolpyruvate: step 6/7. Functionally, the AROM polypeptide catalyzes 5 consecutive enzymatic reactions in prechorismate polyaromatic amino acid biosynthesis. The protein is Pentafunctional AROM polypeptide of Phaeosphaeria nodorum (strain SN15 / ATCC MYA-4574 / FGSC 10173) (Glume blotch fungus).